Consider the following 390-residue polypeptide: GTPase Obg (390 aa).

The 159-residue stretch at 1 to 159 (MKFVDEASIL…RELLLELMLL (159 aa)) folds into the Obg domain. The tract at residues 127–147 (NTRFKSSVNRTPRQKTNGTPG) is disordered. Residues 129-145 (RFKSSVNRTPRQKTNGT) show a composition bias toward polar residues. The OBG-type G domain occupies 160 to 333 (ADVGMLGMPN…LCWDVMTFIL (174 aa)). Residues 166–173 (GMPNAGKS), 191–195 (FTTLV), 213–216 (DIPG), 283–286 (NKID), and 314–316 (SAA) each bind GTP. The Mg(2+) site is built by Ser-173 and Thr-193.

It belongs to the TRAFAC class OBG-HflX-like GTPase superfamily. OBG GTPase family. As to quaternary structure, monomer. The cofactor is Mg(2+).

Its subcellular location is the cytoplasm. Functionally, an essential GTPase which binds GTP, GDP and possibly (p)ppGpp with moderate affinity, with high nucleotide exchange rates and a fairly low GTP hydrolysis rate. Plays a role in control of the cell cycle, stress response, ribosome biogenesis and in those bacteria that undergo differentiation, in morphogenesis control. This is GTPase Obg from Shigella sonnei (strain Ss046).